The chain runs to 141 residues: Nucleoside diphosphate kinase (141 aa).

ATP is bound by residues Lys11, Phe59, Arg87, Thr93, Arg104, and Asn114. His117 acts as the Pros-phosphohistidine intermediate in catalysis.

Belongs to the NDK family. As to quaternary structure, homotetramer. It depends on Mg(2+) as a cofactor.

The protein resides in the cytoplasm. The catalysed reaction is a 2'-deoxyribonucleoside 5'-diphosphate + ATP = a 2'-deoxyribonucleoside 5'-triphosphate + ADP. The enzyme catalyses a ribonucleoside 5'-diphosphate + ATP = a ribonucleoside 5'-triphosphate + ADP. Its function is as follows. Major role in the synthesis of nucleoside triphosphates other than ATP. The ATP gamma phosphate is transferred to the NDP beta phosphate via a ping-pong mechanism, using a phosphorylated active-site intermediate. This Leptothrix cholodnii (strain ATCC 51168 / LMG 8142 / SP-6) (Leptothrix discophora (strain SP-6)) protein is Nucleoside diphosphate kinase.